Here is a 647-residue protein sequence, read N- to C-terminus: RalBP1-associated Eps domain-containing protein 2 (647 aa).

The EH 1 domain occupies E21 to P122. Residues E156–P233 form a disordered region. The span at N158–E170 shows a compositional bias: basic and acidic residues. Positions P221–G230 are enriched in low complexity. S239 is modified (phosphoserine). An EH 2 domain is found at Q268–F359. Residues L301–R336 enclose the EF-hand domain. Residues D314, D316, D318, and E325 each contribute to the Ca(2+) site. The interval P402–A478 is disordered. T466 carries the phosphothreonine modification. S480 bears the Phosphoserine mark. Residues P492–E568 are disordered. The span at L499 to C510 shows a compositional bias: pro residues. The tract at residues P501–L647 is interaction with RALBP1. Residues S524–T539 show a composition bias toward polar residues. The segment at P548–L647 is interaction with ASAP1. The stretch at I599–Q640 forms a coiled coil.

In terms of assembly, interacts with EPN1. Interacts with EPS15 AND EPS15L1. Interacts with RALBP1; can form a ternary complex with activated Ral (RALA or RALB). Interacts with ASAP1; the interaction is direct and this complex can bind paxillin. Also forms a ternary complex with RALBP1 and ASAP1. Interacts with GRB2. Post-translationally, tyrosine-phosphorylated upon stimulation of cells with EGF. Phosphorylation on Tyr-residues induces its association with the EGF receptor probably indirectly through an adapter like GRB2.

It localises to the cytoplasm. Involved in ligand-dependent receptor mediated endocytosis of the EGF and insulin receptors as part of the Ral signaling pathway. By controlling growth factor receptors endocytosis may regulate cell survival. Through ASAP1 may regulate cell adhesion and migration. The sequence is that of RalBP1-associated Eps domain-containing protein 2 (Reps2) from Mus musculus (Mouse).